We begin with the raw amino-acid sequence, 537 residues long: GTPase LSG1-1 (537 aa).

Positions 158–362 (WRQLWRVLER…LCDCPGLVFP (205 aa)) constitute a CP-type G domain. Residues 176–180 (DARDP) carry the DARXP motif motif. Residues 206–209 (NKAD) are G4. 206–209 (NKAD) is a binding site for GTP. The interval 234–236 (SAK) is G5. A G1 region spans residues 311–318 (GYPNVGKS). 314–319 (NVGKSS) serves as a coordination point for GTP. Residues 337–341 (GKTKH) are G2. The tract at residues 355-358 (DCPG) is G3. Position 358 (G358) interacts with GTP. A disordered region spans residues 484–508 (LGAETREGSQTEKKGEEAPSLGLDQ). The segment covering 487-500 (ETREGSQTEKKGEE) has biased composition (basic and acidic residues).

Belongs to the TRAFAC class YlqF/YawG GTPase family. In terms of tissue distribution, ubiquitous, with the highest expression in stem and hypsophyll on day 66.

Its subcellular location is the cytoplasm. Functionally, GTPase that might be redundant with LSG1-2 for ribosome biogenesis. Binds to 23S rRNA. This is GTPase LSG1-1 from Arabidopsis thaliana (Mouse-ear cress).